The chain runs to 1178 residues: MFELNNFDAIQIGLASPEQIRQWSRGEVKKPETINYRTLKPERDGLFCERIFGPMKDWECHCGKYKRVRYKGIVCDRCGVEVTKAKVRRERMGHIELAAPVSHIWYFKGIPSRMGLILDMSPRALEKVLYFASYIVIDPKETPLLKKQLLNEKEYREAVDKYGDESFVAGMGAEAIQDLLNEIDLVTSSKELKEELKQSSGQKKVRIIRRLEVVESFRKSGNDPQWMVINVIPVIPPDLRPMVQLDGGRFATSDLNDLYRRVINRNNRLKKLLDLGAPDIIVRNEKRMLQEAVDALIDNGRRGRPVTGPGNRPLKSLSDMLKGKQGRFRQNLLGKRVDYSGRSVIVVGPELKMYQCGLPKEMAIELFKPFVMKKLVQDGIAHNIKSAKRMVERVLPQVWDVLEEVIADHPVLLNRAPTLHRLGIQAFQPVLVEGRAIKLHPLACTAYNADFDGDQMAVHLPLSVEAQAEARFLMLAATNILKPSDGKPVCVPTQDMILGSYYLTMDKNGAKGDGMTFSSKDEAIMAYEVKEIDIHAQINVRMFREVDGELKSKIIKTTVGKIIFNESIPQNLGLVNRENEEESFNLEVDFLATKKSLGKIIDQCYMKHGPVKTSIMLDNIKALGYHYSSIGAVTVASSDIIVPKVKYDLLKEADETIEKIEKMYKRGFISDEERYERVIEKWTQTTEDVANALMDSLDKFNPIYMMADSGARGSKSQIKQLAGMRGLMASPSGKIIELPIRASFKEGLDVIEYFLSTHGARKGNADTALKTADSGYLTRRLVDVSQDVIVREEDCGTDEGIFVSEIKEGNEVIEELRERLIGRYTAEDIVDPETGDVLHPKNEYMDPYAADKIVSAGIKKVKIRSVFTCKCKVGVCARCYGMNMATAKKIDIGEAVGIIAAQSIGEPGTQLTMRTFHTGGVAGADITQGLPRVEELFEARKPKGLAIVSEIAGTARIEETKKKRTVIVMGADGEERSYDIPFGSRLRVNESDYVEAGDEITEGSVNPHDIMSIKGIDGARRYLLSEVQKVYRLQGVDINDKHLEVVVRQMTRKIKIVDSGDTDLLPGTMIDMFDFYEENARVREFGGEEAKGEQTLLGITKAALATDSFLSAASFQETTRVLTEAAIKGKVDPLVGLKENVIIGKLIPAGTGMMRYRSLKVETDSELVEETIGETVEE.

Zn(2+) is bound by residues Cys60, Cys62, Cys75, and Cys78. Asp450, Asp452, and Asp454 together coordinate Mg(2+). Cys795, Cys869, Cys876, and Cys879 together coordinate Zn(2+).

It belongs to the RNA polymerase beta' chain family. The RNAP catalytic core consists of 2 alpha, 1 beta, 1 beta' and 1 omega subunit. When a sigma factor is associated with the core the holoenzyme is formed, which can initiate transcription. Mg(2+) serves as cofactor. Zn(2+) is required as a cofactor.

The catalysed reaction is RNA(n) + a ribonucleoside 5'-triphosphate = RNA(n+1) + diphosphate. In terms of biological role, DNA-dependent RNA polymerase catalyzes the transcription of DNA into RNA using the four ribonucleoside triphosphates as substrates. This chain is DNA-directed RNA polymerase subunit beta', found in Clostridium beijerinckii (strain ATCC 51743 / NCIMB 8052) (Clostridium acetobutylicum).